The sequence spans 277 residues: Photosystem I assembly factor PSA3, chloroplastic (277 aa).

The transit peptide at 1–45 directs the protein to the chloroplast; the sequence is MVVVTHISTSFHQISPSFFHLRLRNPSTTSSSRPKLDGGFALSIR.

In terms of assembly, interacts with PYG7.

It localises to the plastid. The protein resides in the chloroplast. The protein localises to the chloroplast thylakoid membrane. In terms of biological role, nuclear genome-encoded factor required for the accumulation of photosystem I (PSI). Functions as a PSI biogenesis factor. Cooperates with PYG7 to promote the stable assembly of PSI in the thylakoid membrane. May target primarily the PsaC subunit. Does not seem to be required for the expression of chloroplast genes encoding PSI subunits. The polypeptide is Photosystem I assembly factor PSA3, chloroplastic (Arabidopsis thaliana (Mouse-ear cress)).